A 216-amino-acid chain; its full sequence is Probable GTP-binding protein EngB (216 aa).

Residues 27 to 201 (EGIEVAFAGR…REKLDTWFSE (175 aa)) form the EngB-type G domain. Residues 35–42 (GRSNAGKS), 62–66 (GRTQL), 80–83 (DLPG), 147–150 (TKAD), and 180–182 (FSS) contribute to the GTP site. Residues Ser42 and Thr64 each coordinate Mg(2+).

This sequence belongs to the TRAFAC class TrmE-Era-EngA-EngB-Septin-like GTPase superfamily. EngB GTPase family. The cofactor is Mg(2+).

Necessary for normal cell division and for the maintenance of normal septation. The protein is Probable GTP-binding protein EngB of Yersinia pseudotuberculosis serotype O:1b (strain IP 31758).